The sequence spans 633 residues: MINVYFSDNSCKQFLPGIKGSDIITHLFPELLNKAIAIKINDKSLDLSTEITEDCKFEVITLDSDEGLDIIRHDTAHIMAQAIKEMFPEVKTVVGPTIKDGFYYDFSTDHIFSSNELEKIEEKMREIIKKNESFIREVWTREEAIRFFSNKGEDYKVKIIAKIPIHENITVYKQGSFIDLCRGPHAPSTKISKAFKLTKVSGSYWEGNTNNAQLQRIYGTAWRTEEELKLYLNNLIEVEKRDHRKIGKELELFHIQNEALGQIFWHEKGLIIYRIIENYIRKKLENNGYIEVKTPYLLSKTLWEQSGHWDKFREHMFLSEIDNKVVAIKPMNCPCHVQIFNSKIRSYKDLPLRMAEFGTCHRYESSGALHGLMRVRSFTQDDAHIFCTEDQIIEEALKFCNLLMEVYEVFGFKDILVKFSDRPEKRAGSDKIWDKAEEALKASVKAANLNYVLNPGDGAFYGPKLEFTLKDAIGREWQCGTLQMDFVLPERLGAYYTGSDGKKHHPIMLHRAILGTIERFIGILIEHHSGKLPIWLAPVQLSILTITEDAIDYAISLKHKAMKQNIRAEVDITNEKINYKIRSHISKKIPVLWIIGKKEIETESVSIRYLESKDQHIMSSDKALKTLLSCASI.

Residues 1–61 form the TGS domain; the sequence is MINVYFSDNS…TEDCKFEVIT (61 aa). Positions 242 to 533 are catalytic; the sequence is DHRKIGKELE…LIEHHSGKLP (292 aa). The Zn(2+) site is built by C333, H384, and H510.

The protein belongs to the class-II aminoacyl-tRNA synthetase family. As to quaternary structure, homodimer. Requires Zn(2+) as cofactor.

Its subcellular location is the cytoplasm. The catalysed reaction is tRNA(Thr) + L-threonine + ATP = L-threonyl-tRNA(Thr) + AMP + diphosphate + H(+). Catalyzes the attachment of threonine to tRNA(Thr) in a two-step reaction: L-threonine is first activated by ATP to form Thr-AMP and then transferred to the acceptor end of tRNA(Thr). Also edits incorrectly charged L-seryl-tRNA(Thr). The sequence is that of Threonine--tRNA ligase from Ehrlichia ruminantium (strain Welgevonden).